Reading from the N-terminus, the 502-residue chain is Lysine--tRNA ligase (502 aa).

Mg(2+) is bound by residues Glu-398 and Glu-405.

This sequence belongs to the class-II aminoacyl-tRNA synthetase family. Homodimer. Requires Mg(2+) as cofactor.

The protein localises to the cytoplasm. The catalysed reaction is tRNA(Lys) + L-lysine + ATP = L-lysyl-tRNA(Lys) + AMP + diphosphate. In Thermosipho melanesiensis (strain DSM 12029 / CIP 104789 / BI429), this protein is Lysine--tRNA ligase.